Reading from the N-terminus, the 908-residue chain is Protein translocase subunit SecA (908 aa).

Residues Gln87, 105–109 (GEGKT), and Asp512 contribute to the ATP site. The disordered stretch occupies residues 865–908 (GGDDGSDEMMAHTPMIRDGDKVGRNDPCPCGSGRKYKQCHGKLS). Positions 879-888 (MIRDGDKVGR) are enriched in basic and acidic residues. Positions 892, 894, 903, and 904 each coordinate Zn(2+). Positions 898–908 (RKYKQCHGKLS) are enriched in basic residues.

It belongs to the SecA family. As to quaternary structure, monomer and homodimer. Part of the essential Sec protein translocation apparatus which comprises SecA, SecYEG and auxiliary proteins SecDF-YajC and YidC. It depends on Zn(2+) as a cofactor.

Its subcellular location is the cell inner membrane. It localises to the cytoplasm. The enzyme catalyses ATP + H2O + cellular proteinSide 1 = ADP + phosphate + cellular proteinSide 2.. Part of the Sec protein translocase complex. Interacts with the SecYEG preprotein conducting channel. Has a central role in coupling the hydrolysis of ATP to the transfer of proteins into and across the cell membrane, serving both as a receptor for the preprotein-SecB complex and as an ATP-driven molecular motor driving the stepwise translocation of polypeptide chains across the membrane. This chain is Protein translocase subunit SecA, found in Shewanella sp. (strain ANA-3).